Here is a 211-residue protein sequence, read N- to C-terminus: Calcipressin-like protein (211 aa).

Phosphoserine occurs at positions 113 and 117. T182 bears the Phosphothreonine mark.

It belongs to the RCAN family.

Functionally, inhibits calcineurin-dependent transcriptional responses by binding to the catalytic domain of calcineurin. In Saccharomyces cerevisiae (strain ATCC 204508 / S288c) (Baker's yeast), this protein is Calcipressin-like protein (RCN1).